The primary structure comprises 258 residues: 5'-nucleotidase SurE (258 aa).

The a divalent metal cation site is built by Asp-9, Asp-10, Ser-42, and Asn-96.

Belongs to the SurE nucleotidase family. Requires a divalent metal cation as cofactor.

It localises to the cytoplasm. The catalysed reaction is a ribonucleoside 5'-phosphate + H2O = a ribonucleoside + phosphate. Its function is as follows. Nucleotidase that shows phosphatase activity on nucleoside 5'-monophosphates. This is 5'-nucleotidase SurE from Campylobacter jejuni subsp. doylei (strain ATCC BAA-1458 / RM4099 / 269.97).